Reading from the N-terminus, the 509-residue chain is Cytochrome P450 monooxygenase ORF9 (509 aa).

Helical transmembrane passes span 20-40 (IYVLPFVISAAALCYFIGLIV) and 309-329 (LIIAGGETVATFLAATVYYLL). Residue N353 is glycosylated (N-linked (GlcNAc...) asparagine). Residue C448 participates in heme binding.

The protein belongs to the cytochrome P450 family. It depends on heme as a cofactor.

The protein localises to the membrane. It participates in sesquiterpene biosynthesis. In terms of biological role, cytochrome P450 monooxygenase; part of the gene cluster that mediates the biosynthesis of PR-toxin, a bicyclic sesquiterpene belonging to the eremophilane class and acting as a mycotoxin. The first step of the pathway is catalyzed by the aristolochene synthase which performs the cyclization of trans,trans-farnesyl diphosphate (FPP) to the bicyclic sesquiterpene aristolochene. Following the formation of aristolochene, the non-oxygenated aristolochene is converted to the trioxygenated intermediate eremofortin B, via 7-epi-neopetasone. This conversion appears to involve three enzymes, a hydroxysterol oxidase-like enzyme, the quinone-oxidase prx3 that forms the quinone-type-structure in the bicyclic nucleus of aristolochene with the C8-oxo group and the C-3 hydroxyl group, and the P450 monooxygenase ORF6 that introduces the epoxide at the double bond between carbons 1 and 2. No monoxy or dioxy-intermediates have been reported to be released to the broth, so these three early oxidative reactions may be coupled together. Eremofortin B is further oxidized by another P450 monooxygenase, that introduces a second epoxide between carbons 7 and 11 prior to acetylation to eremofortin A by the acetyltransferase ORF8. The second epoxidation may be performed by a second P450 monooxygenase. After the acetylation step, eremofortin A is converted to eremofortin C and then to PR-toxin. First the conversion of eremofortin A to eremofortin C proceeds by oxidation of the side chain of the molecule at C-12 and is catalyzed by the short-chain oxidoreductase prx1. The cytochrome P450 monooxygenase ORF6 is probably also involved in this step. The primary alcohol formed at C-12 is finally oxidized by the short-chain alcohol dehydrogenase prx4 that forms PR-toxin. This Penicillium roqueforti (strain FM164) protein is Cytochrome P450 monooxygenase ORF9.